A 518-amino-acid chain; its full sequence is D-aminopeptidase (518 aa).

Serine 62 (nucleophile) is an active-site residue. Lysine 65 serves as the catalytic Proton donor/acceptor. Positions 373–392 (FGTGPEKMDISGENEAQSSM) are disordered. The segment at 477–487 (QRSMDAPSPGE) is important for specificity. Substrate is bound at residue aspartate 481.

Belongs to the peptidase S12 family. As to quaternary structure, homodimer.

It carries out the reaction Release of an N-terminal D-amino acid from a peptide, Xaa-|-Yaa-, in which Xaa is preferably D-Ala, D-Ser or D-Thr. D-amino acid amides and methyl esters also are hydrolyzed, as is glycine amide.. Its activity is regulated as follows. Inhibited by beta-lactam compounds such as 6-aminopenicillic acid, 7-aminocephalosporanic acid, benzylpenicillin and ampicillin. Inhibited by p-chloromercuribenzoate. Functionally, hydrolyzes N-terminal residues in D-amino acid-containing peptides. The sequence is that of D-aminopeptidase from Brucella melitensis biotype 1 (strain ATCC 23456 / CCUG 17765 / NCTC 10094 / 16M).